The primary structure comprises 21 residues: Cytoplasmic filament protein A (21 aa).

The segment at 1 to 21 is disordered; the sequence is AILELPQSPNVFHPEKPSAVG.

Its subcellular location is the cytoplasm. Its function is as follows. Component of the cytoplasmic filaments that run the length of the organism just underneath the cytoplasmic membrane. This is Cytoplasmic filament protein A (cfpA) from Treponema phagedenis.